The primary structure comprises 480 residues: Ochratoxinase (480 aa).

Positions 111, 113, 246, 287, and 307 each coordinate Zn(2+). Lysine 246 is a catalytic residue. Residue aspartate 378 is part of the active site.

Belongs to the metallo-dependent hydrolases superfamily. Ochratoxinase amidase 2 family. As to quaternary structure, homooctamer. Zn(2+) serves as cofactor.

The protein localises to the secreted. The enzyme catalyses ochratoxin A + H2O = ochratoxin alpha + L-phenylalanine. With respect to regulation, the Zn(2+)-specific chelator 1,10-phenanthroline inhibits the enzyme activity. Its function is as follows. Carboxypeptidase that catalyzes the release of a C-terminal amino acid with specific catalytic activity for aromatic amino acids such as phenylalanine. Is able to degrade ochratoxin A, one of the five major mycotoxins most harmful to humans and animals that is produced by Aspergillus and Penicillium species and occurs in a wide range of agricultural products. This Aspergillus niger (strain ATCC 1015 / CBS 113.46 / FGSC A1144 / LSHB Ac4 / NCTC 3858a / NRRL 328 / USDA 3528.7) protein is Ochratoxinase.